The primary structure comprises 374 residues: Histidinol-phosphate aminotransferase 1 (374 aa).

An N6-(pyridoxal phosphate)lysine modification is found at Lys-232.

This sequence belongs to the class-II pyridoxal-phosphate-dependent aminotransferase family. Histidinol-phosphate aminotransferase subfamily. As to quaternary structure, homodimer. It depends on pyridoxal 5'-phosphate as a cofactor.

The enzyme catalyses L-histidinol phosphate + 2-oxoglutarate = 3-(imidazol-4-yl)-2-oxopropyl phosphate + L-glutamate. It participates in amino-acid biosynthesis; L-histidine biosynthesis; L-histidine from 5-phospho-alpha-D-ribose 1-diphosphate: step 7/9. The chain is Histidinol-phosphate aminotransferase 1 (hisC1) from Ralstonia nicotianae (strain ATCC BAA-1114 / GMI1000) (Ralstonia solanacearum).